The chain runs to 277 residues: Probable endonuclease 4 (277 aa).

Zn(2+) contacts are provided by H67, H107, E142, D176, H179, H211, D224, H226, and E256.

It belongs to the AP endonuclease 2 family. The cofactor is Zn(2+).

It catalyses the reaction Endonucleolytic cleavage to 5'-phosphooligonucleotide end-products.. Its function is as follows. Endonuclease IV plays a role in DNA repair. It cleaves phosphodiester bonds at apurinic or apyrimidinic (AP) sites, generating a 3'-hydroxyl group and a 5'-terminal sugar phosphate. The chain is Probable endonuclease 4 from Clostridium beijerinckii (strain ATCC 51743 / NCIMB 8052) (Clostridium acetobutylicum).